We begin with the raw amino-acid sequence, 154 residues long: Myoglobin (154 aa).

A Globin domain is found at 2–148 (GLSDGEWQLV…FRNDMAAKYK (147 aa)). Ser4 is modified (phosphoserine). Residue His65 coordinates nitrite. Residue His65 participates in O2 binding. Residue Thr68 is modified to Phosphothreonine. A heme b-binding site is contributed by His94.

The protein belongs to the globin family. As to quaternary structure, monomeric.

It is found in the cytoplasm. Its subcellular location is the sarcoplasm. It catalyses the reaction Fe(III)-heme b-[protein] + nitric oxide + H2O = Fe(II)-heme b-[protein] + nitrite + 2 H(+). It carries out the reaction H2O2 + AH2 = A + 2 H2O. Monomeric heme protein which primary function is to store oxygen and facilitate its diffusion within muscle tissues. Reversibly binds oxygen through a pentacoordinated heme iron and enables its timely and efficient release as needed during periods of heightened demand. Depending on the oxidative conditions of tissues and cells, and in addition to its ability to bind oxygen, it also has a nitrite reductase activity whereby it regulates the production of bioactive nitric oxide. Under stress conditions, like hypoxia and anoxia, it also protects cells against reactive oxygen species thanks to its pseudoperoxidase activity. The sequence is that of Myoglobin (MB) from Saimiri sciureus (Common squirrel monkey).